A 339-amino-acid chain; its full sequence is Anthranilate phosphoribosyltransferase (339 aa).

5-phospho-alpha-D-ribose 1-diphosphate contacts are provided by residues G79, 82 to 83 (GD), T87, 89 to 92 (NVST), 107 to 115 (KHGNRAVSS), and S119. G79 lines the anthranilate pocket. Position 91 (S91) interacts with Mg(2+). N110 is an anthranilate binding site. R165 provides a ligand contact to anthranilate. 2 residues coordinate Mg(2+): D224 and E225.

Belongs to the anthranilate phosphoribosyltransferase family. As to quaternary structure, homodimer. Requires Mg(2+) as cofactor.

The catalysed reaction is N-(5-phospho-beta-D-ribosyl)anthranilate + diphosphate = 5-phospho-alpha-D-ribose 1-diphosphate + anthranilate. It functions in the pathway amino-acid biosynthesis; L-tryptophan biosynthesis; L-tryptophan from chorismate: step 2/5. Catalyzes the transfer of the phosphoribosyl group of 5-phosphorylribose-1-pyrophosphate (PRPP) to anthranilate to yield N-(5'-phosphoribosyl)-anthranilate (PRA). The protein is Anthranilate phosphoribosyltransferase of Geobacillus stearothermophilus (Bacillus stearothermophilus).